The primary structure comprises 445 residues: C4-dicarboxylate transport protein 2 (445 aa).

Helical transmembrane passes span 24–44 (ILYV…WLFP), 62–82 (LIKM…IAHI), 96–116 (LVYF…VGNL), 163–183 (GDIL…MALG), 201–221 (FGVI…AMAF), 237–257 (LIAL…GLIA), 334–354 (ALGV…AMLT), and 366–386 (FITL…GMAI).

Belongs to the dicarboxylate/amino acid:cation symporter (DAACS) (TC 2.A.23) family.

It localises to the cell inner membrane. Its function is as follows. Responsible for the transport of dicarboxylates such as succinate, fumarate, and malate from the periplasm across the membrane. The protein is C4-dicarboxylate transport protein 2 of Bradyrhizobium sp. (strain ORS 278).